Here is a 308-residue protein sequence, read N- to C-terminus: Cytochrome b (308 aa).

The next 4 helical transmembrane spans lie at 1 to 21 (SGSLLGMCLIVRIITGLFLAA), 45 to 66 (WLIRNLHANGASLFFICIYLHI), 81 to 101 (WNIGVILLLALMATAFVGYVL), and 146 to 166 (FFALHFLLPFVIAGLTLVHLT). Residues His-51 and His-65 each coordinate heme b. Residues His-150 and His-164 each contribute to the heme b site. His-169 provides a ligand contact to a ubiquinone. 3 consecutive transmembrane segments (helical) span residues 194–214 (TKDVLGFALLLTPLIALALFS), 256–276 (LGGVLALAASVLVLFLIPLLH), and 288–308 (LSQILFWALVANLLVLTWVGS).

It belongs to the cytochrome b family. As to quaternary structure, the cytochrome bc1 complex contains 11 subunits: 3 respiratory subunits (MT-CYB, CYC1 and UQCRFS1), 2 core proteins (UQCRC1 and UQCRC2) and 6 low-molecular weight proteins (UQCRH/QCR6, UQCRB/QCR7, UQCRQ/QCR8, UQCR10/QCR9, UQCR11/QCR10 and a cleavage product of UQCRFS1). This cytochrome bc1 complex then forms a dimer. The cofactor is heme b.

The protein resides in the mitochondrion inner membrane. Its function is as follows. Component of the ubiquinol-cytochrome c reductase complex (complex III or cytochrome b-c1 complex) that is part of the mitochondrial respiratory chain. The b-c1 complex mediates electron transfer from ubiquinol to cytochrome c. Contributes to the generation of a proton gradient across the mitochondrial membrane that is then used for ATP synthesis. This is Cytochrome b (MT-CYB) from Garritornis isidorei (Papuan babbler).